The sequence spans 51 residues: Protein I177L (51 aa).

N11 carries N-linked (GlcNAc...) asparagine; by host glycosylation.

Belongs to the asfivirus I177L family.

It is found in the virion. This chain is Protein I177L, found in Ornithodoros (relapsing fever ticks).